Here is a 266-residue protein sequence, read N- to C-terminus: MRLIPLNTAEQVGKWAARHIVNRINAFKPTADRPFVLGLPTGGTPLTAYKALVEMHKAGEVSFKHVVTFNMDEYVGLPKEHPESYYSFMHRNFFDHVDIPAENINLLNGNAPDIDAECRQYEEKIRSYGKIHLFMGGVGNDGHIAFNEPASSLASRTRIKTLTHDTRVANSRFFDGDVNQVPKYALTVGVGTLLDAEEVMILVLGHQKAQALQAAVEGNVNHMWTISCLQLHPKAVVVCDEPATMELKVKTLKYFNELEAENIKGL.

D72 acts as the Proton acceptor; for enolization step in catalysis. D141 functions as the For ring-opening step in the catalytic mechanism. H143 serves as the catalytic Proton acceptor; for ring-opening step. The active-site For ring-opening step is E148.

Belongs to the glucosamine/galactosamine-6-phosphate isomerase family. NagB subfamily. Homohexamer.

It catalyses the reaction alpha-D-glucosamine 6-phosphate + H2O = beta-D-fructose 6-phosphate + NH4(+). Its pathway is amino-sugar metabolism; N-acetylneuraminate degradation; D-fructose 6-phosphate from N-acetylneuraminate: step 5/5. Allosterically activated by N-acetylglucosamine 6-phosphate (GlcNAc6P). Functionally, catalyzes the reversible isomerization-deamination of glucosamine 6-phosphate (GlcN6P) to form fructose 6-phosphate (Fru6P) and ammonium ion. This is Glucosamine-6-phosphate deaminase from Salmonella arizonae (strain ATCC BAA-731 / CDC346-86 / RSK2980).